Reading from the N-terminus, the 451-residue chain is Serine--tRNA ligase (451 aa).

258–260 (TSE) lines the L-serine pocket. ATP is bound at residue 289–291 (RSE). L-serine is bound at residue Glu-312. 376–379 (EISS) provides a ligand contact to ATP. Residue Ser-411 coordinates L-serine.

This sequence belongs to the class-II aminoacyl-tRNA synthetase family. Type-1 seryl-tRNA synthetase subfamily. Homodimer. The tRNA molecule binds across the dimer.

It is found in the cytoplasm. The catalysed reaction is tRNA(Ser) + L-serine + ATP = L-seryl-tRNA(Ser) + AMP + diphosphate + H(+). The enzyme catalyses tRNA(Sec) + L-serine + ATP = L-seryl-tRNA(Sec) + AMP + diphosphate + H(+). Its pathway is aminoacyl-tRNA biosynthesis; selenocysteinyl-tRNA(Sec) biosynthesis; L-seryl-tRNA(Sec) from L-serine and tRNA(Sec): step 1/1. Its function is as follows. Catalyzes the attachment of serine to tRNA(Ser). Is also able to aminoacylate tRNA(Sec) with serine, to form the misacylated tRNA L-seryl-tRNA(Sec), which will be further converted into selenocysteinyl-tRNA(Sec). This chain is Serine--tRNA ligase, found in Bordetella bronchiseptica (strain ATCC BAA-588 / NCTC 13252 / RB50) (Alcaligenes bronchisepticus).